Consider the following 519-residue polypeptide: NADH dehydrogenase (519 aa).

Residues 1-183 (MVLEPQIKSQ…YLNGESFTSG (183 aa)) are membrane-binding. The interval 184–519 (RMTVEEILAQ…TTPAESAAAK (336 aa)) is catalytic. 210 to 241 (DVLVVGGGPAGASSAIYAARKGIRTGIVADRF) serves as a coordination point for FAD. Residues cysteine 337 and cysteine 340 are joined by a disulfide bond. 349–379 (DVAVIGGGNSGVEAAIDLAGIVNHVTVLEFM) contacts NAD(+). FAD is bound at residue 469–479 (TNVPGVFAAGD).

Belongs to the class-II pyridine nucleotide-disulfide oxidoreductase family. In terms of assembly, homodimer. It depends on FAD as a cofactor.

The protein resides in the cell membrane. It catalyses the reaction a ubiquinone + NADH + 5 H(+)(in) = a ubiquinol + NAD(+) + 4 H(+)(out). In terms of biological role, transfer of electrons from NADH to the respiratory chain. The immediate electron acceptor for the enzyme is believed to be ubiquinone. The sequence is that of NADH dehydrogenase (ahpF) from Ferdinandcohnia aciditolerans (strain JCM 32973 / CCTCC AB 2017280 / YN-1) (Bacillus aciditolerans).